The sequence spans 411 residues: E3 ubiquitin-protein ligase PUB23 (411 aa).

The region spanning 11–86 is the U-box domain; sequence EIPPFFLCPI…QSWCTLNASY (76 aa). ARM repeat units follow at residues 132-173, 175-203, 221-261, and 263-306; these read ATNK…HLET, ETVLKNLLNNKKDNNIVKSLTKIMQRGMY, DPMQ…NICP, and GRNR…LLCQ.

As to quaternary structure, interacts with RPN12A. Auto-ubiquitinated.

The protein localises to the cytoplasm. It catalyses the reaction S-ubiquitinyl-[E2 ubiquitin-conjugating enzyme]-L-cysteine + [acceptor protein]-L-lysine = [E2 ubiquitin-conjugating enzyme]-L-cysteine + N(6)-ubiquitinyl-[acceptor protein]-L-lysine.. Its pathway is protein modification; protein ubiquitination. Functionally, E3 ubiquitin-protein ligase that negatively regulates water stress response. May control in coordination with PUB23 a drought signaling pathway by ubiquitinating cytosolic RPN12a. Acts as a negative regulator of the immunity triggered by the pathogen-associated molecular patterns (PAMPs), in association with PUB22 and PUB24. In Arabidopsis thaliana (Mouse-ear cress), this protein is E3 ubiquitin-protein ligase PUB23 (PUB23).